We begin with the raw amino-acid sequence, 103 residues long: MVYKARISLSGTENKIVDVVCEEIKGIAKRTGVEIHGPIPLPTKRLVVPVRKSPDGEGSPTWDRWEMRVHKRLIDVDADERTLRQLMRISIPDGVRIEIQIKS.

It belongs to the universal ribosomal protein uS10 family. Part of the 30S ribosomal subunit.

Functionally, involved in the binding of tRNA to the ribosomes. This is Small ribosomal subunit protein uS10 from Picrophilus torridus (strain ATCC 700027 / DSM 9790 / JCM 10055 / NBRC 100828 / KAW 2/3).